Here is an 808-residue protein sequence, read N- to C-terminus: Phenylalanine--tRNA ligase beta subunit (808 aa).

A tRNA-binding domain is found at 40–155 (NQGATGVVVG…DDVEIGSDAL (116 aa)). Positions 409-484 (IEEPVVSLNL…RLYGYDNIPT (76 aa)) constitute a B5 domain. D462, D468, E471, and E472 together coordinate Mg(2+). The region spanning 714–807 (PRFPAISRDI…LEASTGAVLR (94 aa)) is the FDX-ACB domain.

This sequence belongs to the phenylalanyl-tRNA synthetase beta subunit family. Type 1 subfamily. In terms of assembly, tetramer of two alpha and two beta subunits. Mg(2+) serves as cofactor.

It is found in the cytoplasm. It catalyses the reaction tRNA(Phe) + L-phenylalanine + ATP = L-phenylalanyl-tRNA(Phe) + AMP + diphosphate + H(+). The chain is Phenylalanine--tRNA ligase beta subunit (pheT) from Halalkalibacterium halodurans (strain ATCC BAA-125 / DSM 18197 / FERM 7344 / JCM 9153 / C-125) (Bacillus halodurans).